A 299-amino-acid chain; its full sequence is MKLLMLCREPRLYSCQRLKESAEDNGHQIDILDPNRCLLKLSKNAPHFELYYQVNSKSEPYLLPDYDAIIPRFGSTSTRMGCAVLRHFRTKNIFCLNDDVAFLKARDKWLSLQLLTEQGIAVPNSALSGAEFSATQAILQIQSPTILKTLHGSQGIGVILAENRKSAVSIMETLTQADVPLLMQDFIQEAQGTDIRCFVIGDKVVATMQRIGQEDEFRANFHRGGSAEKIQLTEQEKVLALKATKCLGLDVAGVDLIRSKQGLLVLEVNASPGLEMIEKTSGIDIALQMIVHIEKQFKR.

An ATP-grasp domain is found at 112–294; that stretch reads LQLLTEQGIA…IALQMIVHIE (183 aa). ATP-binding positions include K148, 185–186, D194, and 218–220; these read DF and RAN. Mg(2+)-binding residues include D255, E267, and N269. Mn(2+) contacts are provided by D255, E267, and N269.

The protein belongs to the RimK family. It depends on Mg(2+) as a cofactor. Mn(2+) serves as cofactor.

This chain is Probable alpha-L-glutamate ligase, found in Histophilus somni (strain 129Pt) (Haemophilus somnus).